The chain runs to 448 residues: Tubulin beta chain (448 aa).

Residues Q11, E69, S138, G142, T143, G144, N204, and N226 each coordinate GTP. E69 contacts Mg(2+). The segment at 429–448 is disordered; it reads SISDGEEQPYAEEAAYEAEE. The segment covering 432–448 has biased composition (acidic residues); it reads DGEEQPYAEEAAYEAEE.

This sequence belongs to the tubulin family. As to quaternary structure, dimer of alpha and beta chains. A typical microtubule is a hollow water-filled tube with an outer diameter of 25 nm and an inner diameter of 15 nM. Alpha-beta heterodimers associate head-to-tail to form protofilaments running lengthwise along the microtubule wall with the beta-tubulin subunit facing the microtubule plus end conferring a structural polarity. Microtubules usually have 13 protofilaments but different protofilament numbers can be found in some organisms and specialized cells. Mg(2+) serves as cofactor.

Its subcellular location is the cytoplasm. The protein resides in the cytoskeleton. In terms of biological role, tubulin is the major constituent of microtubules, a cylinder consisting of laterally associated linear protofilaments composed of alpha- and beta-tubulin heterodimers. Microtubules grow by the addition of GTP-tubulin dimers to the microtubule end, where a stabilizing cap forms. Below the cap, tubulin dimers are in GDP-bound state, owing to GTPase activity of alpha-tubulin. This Aspergillus fumigatus (strain ATCC MYA-4609 / CBS 101355 / FGSC A1100 / Af293) (Neosartorya fumigata) protein is Tubulin beta chain.